The chain runs to 205 residues: uncharacterized protein (205 aa).

Helical transmembrane passes span 45 to 65 (LFFYFFANFFTNSFIVQFLVI), 119 to 139 (VFWLGLVVGPAAWIFFVVTAF), and 144 to 164 (FEWMIVALLGALMNMANLWGY).

It belongs to the TVP23 family.

It localises to the membrane. This is an uncharacterized protein from Caenorhabditis elegans.